The primary structure comprises 815 residues: Protein-glutamine gamma-glutamyltransferase K (815 aa).

A compositionally biased stretch (basic and acidic residues) spans M1–R10. Disordered stretches follow at residues M1–A48 and D62–D101. Positions W16–E25 are enriched in pro residues. T21 is subject to Phosphothreonine. Phosphoserine occurs at positions 23, 71, 83, 91, and 94. Residues P66 to S78 are compositionally biased toward low complexity. Basic and acidic residues predominate over residues R79–S91. Active-site residues include C376, H435, and D458. Ca(2+)-binding residues include N498, D500, E547, and E552. Residues G791–A815 form a disordered region. S803 carries the phosphoserine modification.

Belongs to the transglutaminase superfamily. Transglutaminase family. Interacts with PLAAT4. The cofactor is Ca(2+). Tyrosine-phosphorylated. In terms of processing, palmitoylated. Post-translationally, the membrane anchorage region possesses a cluster of five cysteines within which fatty acid(s) may become thioester-linked. It is subject to phorbol ester-stimulated phosphorylation and is hypersensitive to proteolysis, which releases the enzyme in a soluble form. In terms of tissue distribution, expressed in large amounts in epithelial tissues (lung, liver and kidney).

It is found in the membrane. The enzyme catalyses L-glutaminyl-[protein] + L-lysyl-[protein] = [protein]-L-lysyl-N(6)-5-L-glutamyl-[protein] + NH4(+). Functionally, catalyzes the cross-linking of proteins and the conjugation of polyamines to proteins. Responsible for cross-linking epidermal proteins during formation of the stratum corneum. Involved in cell proliferation. The chain is Protein-glutamine gamma-glutamyltransferase K (Tgm1) from Mus musculus (Mouse).